Reading from the N-terminus, the 303-residue chain is Coenzyme PQQ synthesis protein B (303 aa).

The protein belongs to the PqqB family.

It functions in the pathway cofactor biosynthesis; pyrroloquinoline quinone biosynthesis. Its function is as follows. May be involved in the transport of PQQ or its precursor to the periplasm. This is Coenzyme PQQ synthesis protein B from Pseudomonas putida (strain W619).